The following is a 252-amino-acid chain: Type II secretion system protein N (252 aa).

Residues 1–4 (MKRA) are Cytoplasmic-facing. A helical membrane pass occupies residues 5-25 (VGYGLLFSTVLMTSVVVHLPA). Residues 26–252 (QVALSPLPLP…RYPFNQQGQL (227 aa)) lie on the Periplasmic side of the membrane.

The protein belongs to the GSP N family.

The protein resides in the cell inner membrane. Its function is as follows. Involved in a type II secretion system (T2SS, formerly general secretion pathway, GSP) for the export of proteins. Required for secretion of cholera toxin through the outer membrane. The protein is Type II secretion system protein N (epsN) of Vibrio cholerae serotype O1 (strain ATCC 39315 / El Tor Inaba N16961).